A 142-amino-acid chain; its full sequence is RNA-directed DNA polymerase homolog (142 aa).

It is found in the mitochondrion. The enzyme catalyses RNA(n) + a ribonucleoside 5'-triphosphate = RNA(n+1) + diphosphate. This Oenothera berteroana (Bertero's evening primrose) protein is RNA-directed DNA polymerase homolog.